A 469-amino-acid chain; its full sequence is Adenosylhomocysteinase (469 aa).

Residues threonine 60, aspartate 135, and glutamate 195 each coordinate substrate. 196-198 (TTT) contacts NAD(+). The substrate site is built by lysine 225 and aspartate 229. Residues asparagine 230, 259 to 264 (GYGDVG), glutamate 282, asparagine 317, 338 to 340 (IGH), and asparagine 383 each bind NAD(+).

The protein belongs to the adenosylhomocysteinase family. NAD(+) serves as cofactor.

Its subcellular location is the cytoplasm. It catalyses the reaction S-adenosyl-L-homocysteine + H2O = L-homocysteine + adenosine. The protein operates within amino-acid biosynthesis; L-homocysteine biosynthesis; L-homocysteine from S-adenosyl-L-homocysteine: step 1/1. In terms of biological role, may play a key role in the regulation of the intracellular concentration of adenosylhomocysteine. The sequence is that of Adenosylhomocysteinase from Maricaulis maris (strain MCS10) (Caulobacter maris).